Here is a 229-residue protein sequence, read N- to C-terminus: 2,3-bisphosphoglycerate-dependent phosphoglycerate mutase (229 aa).

Residues 7–14 (RHGQSEWN), 20–21 (TG), R59, 86–89 (ERHY), K97, 113–114 (RR), and 182–183 (GN) contribute to the substrate site. H8 acts as the Tele-phosphohistidine intermediate in catalysis. The Proton donor/acceptor role is filled by E86.

The protein belongs to the phosphoglycerate mutase family. BPG-dependent PGAM subfamily.

It catalyses the reaction (2R)-2-phosphoglycerate = (2R)-3-phosphoglycerate. It participates in carbohydrate degradation; glycolysis; pyruvate from D-glyceraldehyde 3-phosphate: step 3/5. Catalyzes the interconversion of 2-phosphoglycerate and 3-phosphoglycerate. The sequence is that of 2,3-bisphosphoglycerate-dependent phosphoglycerate mutase from Listeria innocua serovar 6a (strain ATCC BAA-680 / CLIP 11262).